A 501-amino-acid polypeptide reads, in one-letter code: uncharacterized protein (501 aa).

The next 7 helical transmembrane spans lie at 14 to 34 (AIFI…SGSV), 73 to 93 (FILF…LGYM), 111 to 131 (IFGI…ICIF), 197 to 217 (FIIA…VLLI), 274 to 294 (ILLS…YYFG), 297 to 317 (FNLI…YNLI), and 466 to 486 (FLVL…RLIL).

The protein localises to the membrane. This is an uncharacterized protein from Dictyostelium discoideum (Social amoeba).